Consider the following 440-residue polypeptide: Protein disulfide-isomerase A6 homolog (440 aa).

The signal sequence occupies residues 1–18 (MALIKLLLASLAITSVCG). 2 Thioredoxin domains span residues 19-131 (MYSK…AEAK) and 127-273 (LAEA…ARAQ). Active-site nucleophile residues include C54 and C57. A disulfide bridge links C54 with C57. A disordered region spans residues 138–164 (LGGKSSGSSSSGSGSGSGKRGGGGSGN). Positions 139-149 (GGKSSGSSSSG) are enriched in low complexity. Over residues 150–163 (SGSGSGKRGGGGSG) the composition is skewed to gly residues. Residues C194 and C197 each act as nucleophile in the active site. C194 and C197 are joined by a disulfide. The interval 404 to 426 (DGFPKIQKTEKWDGKDGALPAED) is disordered. A compositionally biased stretch (basic and acidic residues) spans 410-419 (QKTEKWDGKD). The Prevents secretion from ER signature appears at 437-440 (KTEL).

The protein belongs to the protein disulfide isomerase family.

It is found in the endoplasmic reticulum lumen. It catalyses the reaction Catalyzes the rearrangement of -S-S- bonds in proteins.. May function as a chaperone that inhibits aggregation of misfolded proteins. May negatively regulate the unfolded protein response (UPR) through binding to UPR sensors. This chain is Protein disulfide-isomerase A6 homolog, found in Caenorhabditis elegans.